A 170-amino-acid chain; its full sequence is MLTLNTKLEKADQIDGELILPYDQREKSRLRATMVSGEDVAVFTVRGTILRDGDILRGDDGRIVKITAAKEPTYRVEALSPHQLLRCAFHLGNRHTQAQIGNGFLRIRKDAVLKEMLEGLGAKVEEELAAFEPESGAYGGGHHHHGDDGHHPLAPIPLRQKIHRPSDKAE.

The interval 134-170 (ESGAYGGGHHHHGDDGHHPLAPIPLRQKIHRPSDKAE) is disordered.

Belongs to the UreE family.

It localises to the cytoplasm. Its function is as follows. Involved in urease metallocenter assembly. Binds nickel. Probably functions as a nickel donor during metallocenter assembly. In Janthinobacterium sp. (strain Marseille) (Minibacterium massiliensis), this protein is Urease accessory protein UreE.